Here is a 166-residue protein sequence, read N- to C-terminus: Regulatory protein RecX (166 aa).

The protein belongs to the RecX family.

It localises to the cytoplasm. Its function is as follows. Modulates RecA activity. This is Regulatory protein RecX from Shigella dysenteriae serotype 1 (strain Sd197).